Here is a 451-residue protein sequence, read N- to C-terminus: Phosphoglucosamine mutase (451 aa).

Catalysis depends on S102, which acts as the Phosphoserine intermediate. 4 residues coordinate Mg(2+): S102, D243, D245, and D247. The residue at position 102 (S102) is a Phosphoserine.

This sequence belongs to the phosphohexose mutase family. Requires Mg(2+) as cofactor. Post-translationally, activated by phosphorylation.

It catalyses the reaction alpha-D-glucosamine 1-phosphate = D-glucosamine 6-phosphate. In terms of biological role, catalyzes the conversion of glucosamine-6-phosphate to glucosamine-1-phosphate. The protein is Phosphoglucosamine mutase of Salinispora arenicola (strain CNS-205).